Consider the following 112-residue polypeptide: UPF0145 protein Acid_4599 (112 aa).

This sequence belongs to the UPF0145 family.

This is UPF0145 protein Acid_4599 from Solibacter usitatus (strain Ellin6076).